The primary structure comprises 73 residues: Small proline-rich protein 2G (73 aa).

Residues 1–11 show a composition bias toward low complexity; the sequence is MSYQQQQCKQP. Residues 1–20 form a disordered region; the sequence is MSYQQQQCKQPCQPPPVCPT. 3 repeat units span residues 21-29, 30-38, and 39-47. Residues 21-47 form a 3 X 9 AA approximate tandem repeats region; the sequence is PKCPEPCPPPKCPEPYLPPPCPPEHCP.

Belongs to the cornifin (SPRR) family.

It localises to the cytoplasm. In terms of biological role, cross-linked envelope protein of keratinocytes. It is a keratinocyte protein that first appears in the cell cytosol, but ultimately becomes cross-linked to membrane proteins by transglutaminase. All that results in the formation of an insoluble envelope beneath the plasma membrane. The protein is Small proline-rich protein 2G (SPRR2G) of Homo sapiens (Human).